The sequence spans 356 residues: Delta(7)-sterol 5(6)-desaturase (356 aa).

Transmembrane regions (helical) follow at residues 87–107 (LTLY…FAGL), 134–154 (QANI…LAEV), and 171–191 (WYDY…IYWI). Residues 179–303 (FFIAFTDLCI…FTTLWDRLGG (125 aa)) form the Fatty acid hydroxylase domain. Residues 192-196 (HRGLH) carry the Histidine box-1 motif. Residues 205–209 (HKPHH) carry the Histidine box-2 motif. The helical transmembrane segment at 235–255 (YIFPFLFPLSKIASVAFFVFV) threads the bilayer. Residues 280–284 (HTMHH) carry the Histidine box-3 motif.

It belongs to the sterol desaturase family. Fe cation serves as cofactor.

The protein localises to the endoplasmic reticulum membrane. It carries out the reaction a Delta(7)-sterol + 2 Fe(II)-[cytochrome b5] + O2 + 2 H(+) = a Delta(5),Delta(7)-sterol + 2 Fe(III)-[cytochrome b5] + 2 H2O. Its pathway is steroid metabolism; ergosterol biosynthesis; ergosterol from zymosterol: step 3/5. Functionally, catalyzes the introduction of a C-5 double bond in the B ring of ergosterol. May contribute to the regulation of ergosterol biosynthesis. The protein is Delta(7)-sterol 5(6)-desaturase (ERG3) of Leptosphaeria maculans (Blackleg fungus).